Reading from the N-terminus, the 431-residue chain is Trigger factor (431 aa).

The 86-residue stretch at 161-246 (DDRVTIDFVG…LKKVENIVLP (86 aa)) folds into the PPIase FKBP-type domain.

Belongs to the FKBP-type PPIase family. Tig subfamily.

The protein localises to the cytoplasm. The catalysed reaction is [protein]-peptidylproline (omega=180) = [protein]-peptidylproline (omega=0). In terms of biological role, involved in protein export. Acts as a chaperone by maintaining the newly synthesized protein in an open conformation. Functions as a peptidyl-prolyl cis-trans isomerase. The sequence is that of Trigger factor from Glaesserella parasuis serovar 5 (strain SH0165) (Haemophilus parasuis).